Here is a 462-residue protein sequence, read N- to C-terminus: Protoheme IX farnesyltransferase, mitochondrial (462 aa).

Residues 1-30 (MSYFPRTYAHLMRNVLAHNKGNIYLQIGTQ) constitute a mitochondrion transit peptide. The next 7 membrane-spanning stretches (helical) occupy residues 158 to 178 (TILV…PASV), 234 to 254 (LIGT…VAIL), 274 to 294 (IINT…GWAA), 298 to 318 (LSHP…FPHF), 352 to 372 (YSIL…TDWY), 373 to 393 (YQID…KFYW), and 425 to 445 (FMAS…HKKG).

It belongs to the UbiA prenyltransferase family. Forms ~370 kDa homooligomeric complexes.

The protein resides in the mitochondrion. It is found in the mitochondrion membrane. It carries out the reaction heme b + (2E,6E)-farnesyl diphosphate + H2O = Fe(II)-heme o + diphosphate. The protein operates within porphyrin-containing compound metabolism; heme O biosynthesis; heme O from protoheme: step 1/1. Positively regulated by the hydroxylated intermediate (heme I) formed at the subsequent step, or by HAS/COX15 itself. Its function is as follows. Catalyzes the first reaction in the biosynthesis of heme A, a prosthetic group of mitochondrial cytochrome c oxidase (CcO). Heme A is synthesized from heme B by two sequential enzymatic reactions catalyzed by heme O synthase (HOS/COX10) and heme A synthase (HAS/COX15). HOS converts heme B (protoheme IX) to heme O by substitution of the vinyl group on carbon 2 of heme B porphyrin ring with a hydroxyethyl farnesyl side group. The protein is Protoheme IX farnesyltransferase, mitochondrial (COX10) of Saccharomyces cerevisiae (strain ATCC 204508 / S288c) (Baker's yeast).